The sequence spans 662 residues: DNA ligase (662 aa).

NAD(+) is bound by residues 31-35 and 79-80; these read DKDYD and SL. The active-site N6-AMP-lysine intermediate is the lysine 121. NAD(+)-binding residues include arginine 143, glutamate 177, and lysine 313. Positions 406, 409, 422, and 428 each coordinate Zn(2+). The BRCT domain maps to 586-662; it reads VLESPFMGKT…LSEEEFENMI (77 aa).

This sequence belongs to the NAD-dependent DNA ligase family. LigA subfamily. Mg(2+) is required as a cofactor. Mn(2+) serves as cofactor.

It carries out the reaction NAD(+) + (deoxyribonucleotide)n-3'-hydroxyl + 5'-phospho-(deoxyribonucleotide)m = (deoxyribonucleotide)n+m + AMP + beta-nicotinamide D-nucleotide.. In terms of biological role, DNA ligase that catalyzes the formation of phosphodiester linkages between 5'-phosphoryl and 3'-hydroxyl groups in double-stranded DNA using NAD as a coenzyme and as the energy source for the reaction. It is essential for DNA replication and repair of damaged DNA. The sequence is that of DNA ligase from Clostridium perfringens (strain 13 / Type A).